The primary structure comprises 1401 residues: DNA-directed RNA polymerase subunit beta (1401 aa).

It belongs to the RNA polymerase beta chain family. The RNAP catalytic core consists of 2 alpha, 1 beta, 1 beta' and 1 omega subunit. When a sigma factor is associated with the core the holoenzyme is formed, which can initiate transcription.

It catalyses the reaction RNA(n) + a ribonucleoside 5'-triphosphate = RNA(n+1) + diphosphate. Functionally, DNA-dependent RNA polymerase catalyzes the transcription of DNA into RNA using the four ribonucleoside triphosphates as substrates. The chain is DNA-directed RNA polymerase subunit beta from Zymomonas mobilis subsp. mobilis (strain ATCC 31821 / ZM4 / CP4).